Consider the following 279-residue polypeptide: MDTELLKTFLEVSRTRHFGRAAESLYLTQSAVSFRIRQLENQLGVNLFTRHRNNIRLTAAGEKLLPYAETLMSTWQAARKEVAHTSRHNEFSIGASASLWECMLNQWLGRLYKNQDAHTGLQFEARIAQRQSLVKQLHERQLDLLITTEAPKMDEFSSQLLGYFTLALYTSAPSKLKGDLNYLRLEWGPDFQQHEAGLIGADEVPILTTSSAELAQQQIAMLNGCTWLPVSWARKKGGLHTVVDSTTLSRPLYAIWLQNSDKNALIRDLLKINVLDEVY.

One can recognise an HTH lysR-type domain in the interval 1–58; sequence MDTELLKTFLEVSRTRHFGRAAESLYLTQSAVSFRIRQLENQLGVNLFTRHRNNIRLT. Positions 18–37 form a DNA-binding region, H-T-H motif; it reads FGRAAESLYLTQSAVSFRIR.

The protein belongs to the LysR transcriptional regulatory family.

Functionally, negatively regulates the transcription of the flagellar master operon flhDC by binding to the upstream region of the operon. The chain is HTH-type transcriptional regulator HdfR from Escherichia coli O7:K1 (strain IAI39 / ExPEC).